Reading from the N-terminus, the 209-residue chain is Orotate phosphoribosyltransferase (209 aa).

5-phospho-alpha-D-ribose 1-diphosphate contacts are provided by residues Arg96, Lys100, His102, and Glu122 to Ser130. Position 126 (Ser126) interacts with orotate.

It belongs to the purine/pyrimidine phosphoribosyltransferase family. PyrE subfamily. Homodimer. Requires Mg(2+) as cofactor.

The enzyme catalyses orotidine 5'-phosphate + diphosphate = orotate + 5-phospho-alpha-D-ribose 1-diphosphate. The protein operates within pyrimidine metabolism; UMP biosynthesis via de novo pathway; UMP from orotate: step 1/2. Its function is as follows. Catalyzes the transfer of a ribosyl phosphate group from 5-phosphoribose 1-diphosphate to orotate, leading to the formation of orotidine monophosphate (OMP). This is Orotate phosphoribosyltransferase from Streptococcus pyogenes serotype M5 (strain Manfredo).